Consider the following 164-residue polypeptide: Ribosome maturation factor RimP (164 aa).

Belongs to the RimP family.

The protein resides in the cytoplasm. Its function is as follows. Required for maturation of 30S ribosomal subunits. This Mycoplasma mycoides subsp. mycoides SC (strain CCUG 32753 / NCTC 10114 / PG1) protein is Ribosome maturation factor RimP.